A 318-amino-acid polypeptide reads, in one-letter code: Protein disulfide-isomerase MPD1 (318 aa).

The signal sequence occupies residues 1–21 (MLFLNIIKLLLGLFIMNEVKA). Positions 22-158 (QNFYDSDPHI…SLSRIRSYVK (137 aa)) constitute a Thioredoxin domain. The N-linked (GlcNAc...) asparagine glycan is linked to Asn47. Cys59 and Cys62 are oxidised to a cystine. Asn307 carries N-linked (GlcNAc...) asparagine glycosylation. The Prevents secretion from ER signature appears at 315 to 318 (HDEL).

Belongs to the protein disulfide isomerase family. As to quaternary structure, interacts with CNE1 and EPS1.

The protein resides in the endoplasmic reticulum lumen. It carries out the reaction Catalyzes the rearrangement of -S-S- bonds in proteins.. Functionally, participates in the folding of proteins containing disulfide bonds. The sequence is that of Protein disulfide-isomerase MPD1 (MPD1) from Saccharomyces cerevisiae (strain ATCC 204508 / S288c) (Baker's yeast).